Consider the following 174-residue polypeptide: Ferredoxin-2, mitochondrial (174 aa).

A mitochondrion-targeting transit peptide spans 1 to 43 (MAASMARGVSARVLLRAAGGSWGPRAGHAAVTSRTFGTTGERR). The interval 26 to 52 (AGHAAVTSRTFGTTGERRAGEEAADSP) is disordered. The region spanning 59 to 161 (VNVVFVDRSG…GVEFALPKIT (103 aa)) is the 2Fe-2S ferredoxin-type domain. Residues Cys-96, Cys-102, Cys-105, and Cys-142 each coordinate [2Fe-2S] cluster.

The protein belongs to the adrenodoxin/putidaredoxin family. As to quaternary structure, component of the mitochondrial core iron-sulfur cluster (ISC) complex composed of NFS1, LYRM4, NDUFAB1, ISCU, FXN, and FDX2; this complex is a heterohexamer containing two copies of each monomer. Form a heterodimer complex with NFS1. Interacts (in both their reduced and oxidized states) with the cysteine desulfurase (NFS1:LYRM4) complex; this interaction stimulates cysteine desulfurase activity, and serves as a reductant for Fe-S cluster assembly. [2Fe-2S] cluster serves as cofactor.

The protein localises to the mitochondrion. It is found in the mitochondrion matrix. Functionally, electron donor, of the core iron-sulfur cluster (ISC) assembly complex, that acts to reduce the persulfide into sulfide during [2Fe-2S] clusters assembly on the scaffolding protein ISCU. The core iron-sulfur cluster (ISC) assembly complex is involved in the de novo synthesis of a [2Fe-2S] cluster, the first step of the mitochondrial iron-sulfur protein biogenesis. This process is initiated by the cysteine desulfurase complex (NFS1:LYRM4:NDUFAB1) that produces persulfide which is delivered on the scaffold protein ISCU in a FXN-dependent manner. Then this complex is stabilized by FDX2 which provides reducing equivalents to accomplish the [2Fe-2S] cluster assembly. Finally, the [2Fe-2S] cluster is transferred from ISCU to chaperone proteins, including HSCB, HSPA9 and GLRX5. Essential for coenzyme Q biosynthesis: together with FDXR, transfers the electrons required for the hydroxylation reaction performed by COQ6. This chain is Ferredoxin-2, mitochondrial, found in Mus musculus (Mouse).